The following is a 314-amino-acid chain: Cytochrome bo(3) ubiquinol oxidase subunit 2 (314 aa).

Residues 1–23 (MSKKRYPRLFGILPFLGMLLLSG) form the signal peptide. Cys-24 is lipidated: N-palmitoyl cysteine. A lipid anchor (S-diacylglycerol cysteine) is attached at Cys-24. Residues 24-42 (CNWTLLDPKGQVGIEQKNL) are Periplasmic-facing. Residues 43–63 (ILIATGLMLLVVIPVIIMTVV) traverse the membrane as a helical segment. Residues 64–86 (FAWKYRASNKAATYTPDWSHSTK) are Cytoplasmic-facing. A helical membrane pass occupies residues 87-107 (IEAAVWIIPILIIIALGYFTY). Residues 108–314 (HSTHKLDPYR…SMQPAAGAEE (207 aa)) lie on the Periplasmic side of the membrane. Residues 278 to 293 (YEGMNRGRPSHEEAGS) are compositionally biased toward basic and acidic residues. Residues 278 to 314 (YEGMNRGRPSHEEAGSKDLATTKGVESSMQPAAGAEE) are disordered.

This sequence belongs to the cytochrome c oxidase subunit 2 family. Heterooctamer of two A chains, two B chains, two C chains and two D chains.

The protein resides in the cell inner membrane. Functionally, cytochrome bo(3) ubiquinol terminal oxidase is the component of the aerobic respiratory chain of E.coli that predominates when cells are grown at high aeration. Has proton pump activity across the membrane in addition to electron transfer, pumping 2 protons/electron. This Pseudomonas putida (Arthrobacter siderocapsulatus) protein is Cytochrome bo(3) ubiquinol oxidase subunit 2 (cyoA).